The chain runs to 221 residues: tRNA (guanine-N(7)-)-methyltransferase (221 aa).

E43, E68, and D123 together coordinate S-adenosyl-L-methionine. The active site involves D123. Substrate contacts are provided by residues K127, D159, and 199–202; that span reads TEYE.

Belongs to the class I-like SAM-binding methyltransferase superfamily. TrmB family.

The enzyme catalyses guanosine(46) in tRNA + S-adenosyl-L-methionine = N(7)-methylguanosine(46) in tRNA + S-adenosyl-L-homocysteine. Its pathway is tRNA modification; N(7)-methylguanine-tRNA biosynthesis. Functionally, catalyzes the formation of N(7)-methylguanine at position 46 (m7G46) in tRNA. The polypeptide is tRNA (guanine-N(7)-)-methyltransferase (Mycoplasma mycoides subsp. mycoides SC (strain CCUG 32753 / NCTC 10114 / PG1)).